Reading from the N-terminus, the 191-residue chain is Peptidyl-tRNA hydrolase (191 aa).

Tyr-17 provides a ligand contact to tRNA. Catalysis depends on His-22, which acts as the Proton acceptor. 3 residues coordinate tRNA: Tyr-68, Asn-70, and Asn-116.

It belongs to the PTH family. As to quaternary structure, monomer.

The protein localises to the cytoplasm. It catalyses the reaction an N-acyl-L-alpha-aminoacyl-tRNA + H2O = an N-acyl-L-amino acid + a tRNA + H(+). Its function is as follows. Hydrolyzes ribosome-free peptidyl-tRNAs (with 1 or more amino acids incorporated), which drop off the ribosome during protein synthesis, or as a result of ribosome stalling. In terms of biological role, catalyzes the release of premature peptidyl moieties from peptidyl-tRNA molecules trapped in stalled 50S ribosomal subunits, and thus maintains levels of free tRNAs and 50S ribosomes. This Mycobacterium ulcerans (strain Agy99) protein is Peptidyl-tRNA hydrolase.